The primary structure comprises 231 residues: Cytidylate kinase (231 aa).

18–26 (GPSGTGKSS) serves as a coordination point for ATP.

This sequence belongs to the cytidylate kinase family. Type 1 subfamily.

Its subcellular location is the cytoplasm. The catalysed reaction is CMP + ATP = CDP + ADP. It carries out the reaction dCMP + ATP = dCDP + ADP. The protein is Cytidylate kinase of Streptomyces avermitilis (strain ATCC 31267 / DSM 46492 / JCM 5070 / NBRC 14893 / NCIMB 12804 / NRRL 8165 / MA-4680).